Reading from the N-terminus, the 69-residue chain is Guanine nucleotide-binding protein G(I)/G(S)/G(O) subunit gamma-T2 (69 aa).

At C66 the chain carries Cysteine methyl ester. C66 carries S-farnesyl cysteine lipidation. Positions 67 to 69 are cleaved as a propeptide — removed in mature form; sequence VLS.

Belongs to the G protein gamma family. In terms of assembly, g proteins are composed of 3 units, alpha, beta and gamma.

It is found in the cell membrane. In terms of biological role, guanine nucleotide-binding proteins (G proteins) are involved as a modulator or transducer in various transmembrane signaling systems. The beta and gamma chains are required for the GTPase activity, for replacement of GDP by GTP, and for G protein-effector interaction. This is Guanine nucleotide-binding protein G(I)/G(S)/G(O) subunit gamma-T2 (Gngt2) from Mus musculus (Mouse).